Consider the following 484-residue polypeptide: Putative sodium/proton-dependent alanine carrier protein YrbD (484 aa).

11 helical membrane passes run 11 to 31 (VLWSTPVIYILLGIGFAFSIM), 66 to 88 (ALSGRVGTGNIAGVATAIAFGGP), 92 to 114 (FWMWAIAFIGAASAFVESTLAQI), 139 to 159 (WFAVLFAAAALIAMAFLMPGV), 172 to 192 (FGISPFVTGCGLVLLLGFIIF), 205 to 225 (IVPFMAIGYILLSLIIIVMNV), 238 to 258 (SAFALDSAFGGLIGMAISWGV), 292 to 312 (AFSVYIDTLFVCSATAFMILF), 350 to 370 (GFGAGFVAIALFFFAFTTIMA), 390 to 410 (WAMLGLKLIILAATFYGTVKT), and 416 to 436 (ALGDAGLGIMVWLNVIAIVLL).

The protein belongs to the alanine or glycine:cation symporter (AGCS) (TC 2.A.25) family.

It is found in the cell membrane. The sequence is that of Putative sodium/proton-dependent alanine carrier protein YrbD (yrbD) from Bacillus subtilis (strain 168).